Here is a 281-residue protein sequence, read N- to C-terminus: uncharacterized protein (281 aa).

4 consecutive transmembrane segments (helical) span residues 8–28 (ALPVVAIVALVASGVITFIWS), 97–117 (LAVALHGLGLSVLLFDYRGYG), 147–167 (PARIAYFGESLGAAVAVGLAV), and 210–230 (IASVHAPVLVIAGGSDDIVPA).

To S.pombe bem46 and yeast YNL320w.

The protein localises to the cell membrane. This is an uncharacterized protein from Mycobacterium tuberculosis (strain CDC 1551 / Oshkosh).